Here is a 270-residue protein sequence, read N- to C-terminus: F-actin-capping protein subunit beta (270 aa).

Belongs to the F-actin-capping protein beta subunit family. As to quaternary structure, component of the F-actin capping complex, composed of a heterodimer of an alpha and a beta subunit.

It localises to the cytoplasm. Its subcellular location is the cytoskeleton. F-actin-capping proteins bind in a Ca(2+)-independent manner to the fast growing ends of actin filaments (barbed end) thereby blocking the exchange of subunits at these ends. Unlike other capping proteins (such as gelsolin and severin), these proteins do not sever actin filaments. This is F-actin-capping protein subunit beta (cap-2) from Caenorhabditis elegans.